Reading from the N-terminus, the 249-residue chain is Exosome complex component Rrp4 (249 aa).

One can recognise an S1 motif domain in the interval 72 to 143; sequence GDTIIGLVED…RTISPVLTVK (72 aa). Positions 151–213 constitute a KH domain; it reads PLGTVMDIMP…EALIEAINII (63 aa).

It belongs to the RRP4 family. Component of the archaeal exosome complex. Forms a trimer of Rrp4 and/or Csl4 subunits. The trimer associates with a hexameric ring-like arrangement composed of 3 Rrp41-Rrp42 heterodimers.

The protein localises to the cytoplasm. Functionally, non-catalytic component of the exosome, which is a complex involved in RNA degradation. Increases the RNA binding and the efficiency of RNA degradation. Confers strong poly(A) specificity to the exosome. This is Exosome complex component Rrp4 from Sulfolobus acidocaldarius (strain ATCC 33909 / DSM 639 / JCM 8929 / NBRC 15157 / NCIMB 11770).